Reading from the N-terminus, the 3660-residue chain is MSAHVLWYEEVEDDYEREDVQKKTFTKWINAQFAKCGRRCIEDLFNDFRDGRKLLELLECLTGQKIAKEKGSTRVHALNNVNKALQILQRNNVDLVNIGSSDIVDGNHKLTLGLIWNIILHWQVKDVMKNIMAGLQQTNSEKILLSWVRQSTRNYPQVNVINFTSSWSDGLAFNALLHSHRPDLFDWNAVASQQSPVQRLDHAFNIARQHLGIEKLLDPEDVATACPDKKSILMYVTSLFQVLPQQVTMEAIREVEMLPRHSRVTTEEHIQVHHQQHFSQEITVNIPQRPSPSPKPRFKSYAYAQTAYVIPPDQKRRQVPPQFLETVEKRTYTTTVMRSEMDLDSYQTALEEVLTWLLSAEDALQAQGDISSDVEVVKEQFHTHEGFMMELTAHQGRVGNVLQVGSQLLAMGKLSDDEENEIQEQMNLLNSRWESLRVASMEKQSNLHKILMDLQNQQLAQLADWLTKTEERTKKIDSEPLGPDLEDLKRQVEEHKAFQDDLEQEQVKVNSLTHMVVVVDENSGDKATAALEEQLQHFGSRWAAICRWTEDRWVLLQDILRKWQHFAEEQCLFDAWLTEKEGSLSKIQTSDFKDENEMLTSLRKLAILKGDIEMKKQMMSKLKSLSRDLLVAVKNKAVAQKLESRLENFAQRWDSLVQKLESDSKQVSQAVTTTQTSLTQTTVMETVTMVTTREQILVKHAKEELPPPPPHKKRQLLVDSEIRKRFDSDTTELHSWMTRSEAVLQSPEFAIYRKEGNLSDLRERVNAIQREKPEKYRKLQDASRSAEALVEQMVNEGLNADNIRQASEQLKSRWIEFCQLLSERLVWLEYQNSIIDFYSQLQRLEQTAITAENWLKAQPTPATDPATVKIQLEKCKDEIIRMSTLQPQIERLKAQSQALKEKEQCPVFLDADLAAFTSHFKQILADMHTREKQLQTIFDSLPPARYKDTVTTILSWIQQSETKVSIPPVAVAEYEIMEQRLGELKALQSSLQEQQKGLKYLNTTVEDLSRKAPAEVSQKYRSEVELIVGRWKKLSSQLVEHCQKLEDLMTKLQRFQNDTKTLKKWMAEVDVFLKEEWPALGDSEALEKQLEQCTALVNDIQTIQPSLNSVNEIGKKMKREAEPEFASRIATELKDLNAQWEHICQQAHAKKAALKGGLDKTVSLRKDLSEMHEWITQAEEEYLERDFEYKTPEELQKAVEELKRAKEDAMQKEVKVKLITDSVNNFIAKAPPAANEALKKELDVLITSYQRLCSRLNGKCKTLEEVWACWHELLSYLDAENKWLNEVELKLKATENIQGGAEEISESLDSLERLMRHPEDNRNQIRELAQTLTDGGILDELINEKLEKFNTRWEELQQEAVRRQKSLEQSIQSAQETDKTLRLIQESLAAIDKQLTAYTADRVDAAQVPQEAQKIQSELTSHEISLEEMKKRNRGKESAKRVLSQIDVAQKKLQDVSMKFRLFQKPANFEQRLQECKRILDEVKLQVPKLETKSVEQEVVQSHLDHCMKLYKSLSEVKSEVETVIKTGRQIVQKQQTENPKELDERLTALKLQYNELGAKVTEKKQELEKCLKLSRKLRKEINSLTEWLAATDVELTKRSAVQGMPSNLDAEIAWGKATRKEIEKRQVQLKNICDLGENLKTVLKGKESLVEDKLSLLNSNWIAVTSRAEEWLNLLMEYQKHMEAFDQKVANVTTWIYRAEILLDESDKQKPQQKEETLKRLKAELNDMHPKVDSVRDQAVDLMTNRGDHCRKVIEPKLSELNHRFAAISQRIKSGKPFIPLKELEQFDFDIQKLLEPLEVEIQQGVNLKEEDFNKDMSEDDESTVKELLQRGDTLQKRITDERKREEIKIKQQLLQTKHNALKDLRSQRRKKALEISHQWYQYKRQADDLMTWLDDIEKKLASLPDHKDEQKLKEIGGELEKKKEDLNAVNRQAERLSKDGAAKAVEPTLVQLSKRWRDFESKFAQFRRLNYAQIQTVLEDTTFVMTESMTVETTYVPSTYLAEILQLLQALSEVEERLNSPVLQAKDCEDLLKQEECLKNIKDCLGRLQGHIDIIHSKKTPALQSATPRETANIQDKLTQLNSQWEKVNKMYRDRQARFDKSKEKWRLFHCEMKSFNEWLTETEEKLSRAQIEAGDVGHVKTKQFLQELQDGIGRQQTVVKTLNVTGEEIIEQSSAADANVLKEQLGNLNTRWQEICRQLVEKRKRIEEEKNILSEFQEDLNKLILWLEETENVIAIPLEPGNEDQLRDCLGKVKLRVEELLPHKGILKRLNETGGTTLGSASLNPERKHKLESTLKEASRRLLKVSRDLPEKQKEIEILLKDFIELNQQINQLTLWITPVKNQLELYNQVGQPGAFDIKETEAAVQAKQPNVEEVLSKGCHLYKEKPATHPVKKKLEDLNADWKAINHLILQLKEKPTFGEPALTSPGVLTSGQTVAVDTQARVTKETTSFTPEMPSSVLLEVPALADFNKAWAELTDWLSRLDREIKAQRVTVGDLDDINDMIIKQKANMQDLEQRRPQLDELITAAQNLKNKTSNQEARTIITDRIEKIQSQWDDVHGYLQNRRQQLHEMQKDSTQWLEAKQEAEQVLEQAKAKLESWKEISYTVEALKKQNSELKQFSKEIRQWQMNIEGVNDVALKPVRDYSADDTRKVELMTDNINATWATINKRVSEREAALESALLMLQEFYLDLEKFLAWLTEAETTANVLQDATHKEKTLEDPQMVRELMKQWQDLQAEIDAHTDIFHNLDENGQKILRSLEGSEDAVLLQRRLDNMNFRWSELRKKSLNIRSHLEASTDQWKRLHLSLQELLAWLQLKEDELKQQAPIGGDIPTVQKQNDVHRTFKRELKTKEPVIMNALETVRLFLADQPVEGLEKVYPEPRDLSPEERAQNVTKVLRRQADDVRTEWDKLNLRSADWQKKIDDALERLQGLQEAMDELDLKLRQAEAFKGSWQPVGDLLIDSLQDHLEKVKVYRAEMVPLKEKVHQVNELAHRFAPPDIQLSPYTLSCLEDLNTRWKVLQVAIDERIRQLHEAHRDFGPTSQHFLTTSVQGPWERAISPNKVPYYINHETQTTCWDHPKMTELYQSLADLNNVRFSAYRTAMKLRRLQKALCLDLLNLSAACDALDQHNLKQNDQPMDILQIINCLTTIYDRLEQEHNNLVNVPLCVDMCLNWLLNVYDTGRTGRIRVLSFKTGVVSLCKAHLEDKYRYLFKQVASSTGFCDQRRLGLLLHDSIQIPRQLGEVASFGGSNIEPSVRSCFQFANNKPEIEAALFLDWMRLEPQSMVWLPVLHRVAAAETAKHQAKCNICKECPIIGFRYRSLKHFNYDICQSCFFSGRVAKGHKMHYPMVEYCTPTTSGEDVRDFAKVLKNKFRTKRYFAKHPRMGYLPVQTVLEGDNMETPVTLINFWPVDSALAEMENSNGSYLNDSISPNESIDDEHLLIQHYCQSLNQESPLSQPRSPAQILISLESEERGELERILADLEEENRNLQAEYDRLKQQHDHKGLSPLPSPPEMMPVSPQSPRDAELIAEAKLLRQHKGRLEARMQILEDHNKQLESQLHRLRQLLEQPQADAKVNGTTLSSPSTSLQRSDSSQPMLLRVVGSQTSETMGEDDLLSPPQDTSTGLEEVMEQLNNSFPSSRGRNAPGKPVREATM.

Positions 1-244 are actin-binding; it reads MSAHVLWYEE…YVTSLFQVLP (244 aa). 2 Calponin-homology (CH) domains span residues 19–123 and 138–244; these read DVQK…LHWQ and TNSE…QVLP. Spectrin repeat units follow at residues 341–449, 450–558, 561–669, 721–830, 832–936, 945–1047, 1050–1156, 1159–1265, 1268–1369, 1470–1570, 1573–1678, 1681–1782, 1879–1981, 2013–2103, 2106–2211, 2214–2321, 2472–2574, 2577–2683, 2686–2799, 2802–2904, 2906–2928, and 2931–3037; these read MDLD…NLHK, ILMD…LLQD, RKWQ…QVSQ, EIRK…WLEY, NSII…QLQT, RYKD…KLED, TKLQ…ALKG, DKTV…TLEE, ACWH…SLEQ, EQRL…ELEK, KLSR…LLME, KHME…FIPL, HQWY…TVLE, LSEV…RFDK, EKWR…RIEE, NILS…EIEI, FNKA…QLHE, KDST…ALES, LMLQ…HLEA, DQWK…LRRQ, DDVRTEWDKLNLRSADWQKKIDD, and ERLQ…QLHE. The WW domain maps to 3052-3085; that stretch reads TSVQGPWERAISPNKVPYYINHETQTTCWDHPKM. A ZZ-type; degenerate zinc finger spans residues 3305 to 3361; sequence KHQAKCNICKECPIIGFRYRSLKHFNYDICQSCFFSGRVAKGHKMHYPMVEYCTPTT. 4 residues coordinate Zn(2+): cysteine 3310, cysteine 3313, cysteine 3334, and cysteine 3337. Disordered stretches follow at residues 3503–3526 and 3575–3660; these read KQQHDHKGLSPLPSPPEMMPVSPQ and PQAD…EATM. Composition is skewed to polar residues over residues 3582–3601 and 3637–3647; these read NGTTLSSPSTSLQRSDSSQP and QLNNSFPSSRG.

It localises to the cell membrane. It is found in the sarcolemma. The protein localises to the cytoplasm. The protein resides in the cytoskeleton. Its subcellular location is the postsynaptic cell membrane. Functionally, may play a role in anchoring the cytoskeleton to the plasma membrane. This Gallus gallus (Chicken) protein is Dystrophin (DMD).